A 342-amino-acid polypeptide reads, in one-letter code: Pre-mRNA-splicing factor 18 (342 aa).

N-acetylmethionine is present on methionine 1.

It belongs to the PRP18 family. In terms of assembly, heterodimer with PPIH. Interacts with PRPF4 and with the spliceosome. Part of a complex containing U4/U6 snRNPs.

It localises to the nucleus speckle. Participates in the second step of pre-mRNA splicing. The polypeptide is Pre-mRNA-splicing factor 18 (PRPF18) (Bos taurus (Bovine)).